The chain runs to 900 residues: Iodate reductase subunit IdrA (900 aa).

The segment at 1-21 is disordered; sequence MSENIKQGGAGTFMQAPQDSV. [3Fe-4S] cluster-binding residues include Cys35, Cys38, and Cys42.

It belongs to the prokaryotic molybdopterin-containing oxidoreductase family. As to quaternary structure, the iodate reductase (Idr) complex is composed of a molybdopterin-dependent iodate reductase (IdrA and IdrB subunits) and two associated peroxidases (IdrP1 and IdrP2). [3Fe-4S] cluster serves as cofactor. It depends on Mo-bis(molybdopterin guanine dinucleotide) as a cofactor.

It localises to the periplasm. Its function is as follows. Involved in iodate respiration. May accept electrons from cytochrome c551, and catalyze the reduction of iodate (IO(3)(-)) to produce the chemically unstable intermediate hypoiodous acid (HIO). This intermediate then undergoes abiotic disproportionation to yield two molecules of iodide (I(-)) and one molecule of iodate. The resultant iodate subsequently cycles back into the reductive pathway. The initial reduction of iodate may inadvertently produce low levels of incidental toxic H(2)O(2), which is detoxified by IdrP1 and IdrP2. The chain is Iodate reductase subunit IdrA from Denitromonas iodatirespirans.